Consider the following 253-residue polypeptide: Alpha-acetolactate decarboxylase (253 aa).

The protein belongs to the alpha-acetolactate decarboxylase family.

The catalysed reaction is (2S)-2-acetolactate + H(+) = (R)-acetoin + CO2. The protein operates within polyol metabolism; (R,R)-butane-2,3-diol biosynthesis; (R,R)-butane-2,3-diol from pyruvate: step 2/3. Its function is as follows. Converts acetolactate into acetoin. The polypeptide is Alpha-acetolactate decarboxylase (alsD) (Bacillus licheniformis (strain ATCC 14580 / DSM 13 / JCM 2505 / CCUG 7422 / NBRC 12200 / NCIMB 9375 / NCTC 10341 / NRRL NRS-1264 / Gibson 46)).